Here is a 238-residue protein sequence, read N- to C-terminus: Ribosomal RNA small subunit methyltransferase G (238 aa).

S-adenosyl-L-methionine is bound by residues Gly78, Phe83, Ala129 to Glu130, and Arg148. The tract at residues Glu216–Lys238 is disordered.

It belongs to the methyltransferase superfamily. RNA methyltransferase RsmG family.

It is found in the cytoplasm. In terms of biological role, specifically methylates the N7 position of a guanine in 16S rRNA. This chain is Ribosomal RNA small subunit methyltransferase G, found in Lactococcus lactis subsp. lactis (strain IL1403) (Streptococcus lactis).